The primary structure comprises 269 residues: Undecaprenyl-diphosphatase (269 aa).

Helical transmembrane passes span 1-21, 40-59, 87-107, 117-137, 147-166, 188-208, 220-240, and 248-268; these read MDIM…ILPI, GLTF…CVYF, FFII…EKPI, LIAL…TTGP, LRGA…PGVS, FSFL…MGEL, PLLA…ALLL, and LYPF…YLFA.

The protein belongs to the UppP family.

Its subcellular location is the cell inner membrane. The catalysed reaction is di-trans,octa-cis-undecaprenyl diphosphate + H2O = di-trans,octa-cis-undecaprenyl phosphate + phosphate + H(+). Catalyzes the dephosphorylation of undecaprenyl diphosphate (UPP). Confers resistance to bacitracin. The polypeptide is Undecaprenyl-diphosphatase (Geobacter sulfurreducens (strain ATCC 51573 / DSM 12127 / PCA)).